The primary structure comprises 292 residues: Elongation factor Ts (292 aa).

Positions 79 to 82 (TDFV) are involved in Mg(2+) ion dislocation from EF-Tu.

The protein belongs to the EF-Ts family.

Its subcellular location is the cytoplasm. Associates with the EF-Tu.GDP complex and induces the exchange of GDP to GTP. It remains bound to the aminoacyl-tRNA.EF-Tu.GTP complex up to the GTP hydrolysis stage on the ribosome. In Xylella fastidiosa (strain 9a5c), this protein is Elongation factor Ts.